A 101-amino-acid chain; its full sequence is NADH-quinone oxidoreductase subunit K (101 aa).

3 consecutive transmembrane segments (helical) span residues 4-24 (LAHFLVLGAILFAISIVGIFL), 30-50 (IVLLMAIELMLLAVNINFVAF), and 61-81 (VFVFFILTVAAAESAIGLAIL).

This sequence belongs to the complex I subunit 4L family. In terms of assembly, NDH-1 is composed of 14 different subunits. Subunits NuoA, H, J, K, L, M, N constitute the membrane sector of the complex.

The protein resides in the cell inner membrane. It carries out the reaction a quinone + NADH + 5 H(+)(in) = a quinol + NAD(+) + 4 H(+)(out). NDH-1 shuttles electrons from NADH, via FMN and iron-sulfur (Fe-S) centers, to quinones in the respiratory chain. The immediate electron acceptor for the enzyme in this species is believed to be ubiquinone. Couples the redox reaction to proton translocation (for every two electrons transferred, four hydrogen ions are translocated across the cytoplasmic membrane), and thus conserves the redox energy in a proton gradient. In Cupriavidus taiwanensis (strain DSM 17343 / BCRC 17206 / CCUG 44338 / CIP 107171 / LMG 19424 / R1) (Ralstonia taiwanensis (strain LMG 19424)), this protein is NADH-quinone oxidoreductase subunit K.